Reading from the N-terminus, the 131-residue chain is Fumarate reductase subunit C (131 aa).

The next 2 membrane-spanning stretches (helical) occupy residues 60 to 80 (FVGF…LAAA) and 110 to 130 (IKGL…VALF).

This sequence belongs to the FrdC family. As to quaternary structure, part of an enzyme complex containing four subunits: a flavoprotein (FrdA), an iron-sulfur protein (FrdB), and two hydrophobic anchor proteins (FrdC and FrdD).

The protein localises to the cell inner membrane. Two distinct, membrane-bound, FAD-containing enzymes are responsible for the catalysis of fumarate and succinate interconversion; fumarate reductase is used in anaerobic growth, and succinate dehydrogenase is used in aerobic growth. Anchors the catalytic components of the fumarate reductase complex to the cell inner membrane, binds quinones. The sequence is that of Fumarate reductase subunit C from Enterobacter sp. (strain 638).